Reading from the N-terminus, the 89-residue chain is Large ribosomal subunit protein eL34 (89 aa).

It belongs to the eukaryotic ribosomal protein eL34 family.

The protein is Large ribosomal subunit protein eL34 (rpl34e) of Methanocaldococcus jannaschii (strain ATCC 43067 / DSM 2661 / JAL-1 / JCM 10045 / NBRC 100440) (Methanococcus jannaschii).